Here is a 761-residue protein sequence, read N- to C-terminus: Zinc finger protein 287 (761 aa).

Positions 49–131 (RQNFRNFPYP…TLVEDLTQIL (83 aa)) constitute an SCAN box domain. The segment at 134-154 (EAPQNSTLSQDTPEEDPRGKH) is disordered. The KRAB domain maps to 170 to 238 (MTFKDVAVDI…IKEILEGPSP (69 aa)). 14 consecutive C2H2-type zinc fingers follow at residues 368 to 390 (YKCN…QSTH), 396 to 418 (YECE…QRMH), 424 to 446 (YECH…QRIH), 452 to 474 (YKCD…QRTH), 480 to 502 (YKCL…QRVH), 508 to 530 (YICN…QKIH), 536 to 558 (YKCN…QRIH), 564 to 586 (YKCN…QTTH), 592 to 614 (YICN…HRTH), 620 to 642 (YKCS…QRIH), 648 to 670 (FKCN…QRIH), 676 to 698 (YKCN…QRTH), 704 to 726 (YKCN…QRIH), and 732 to 754 (YACR…QRVH).

The protein belongs to the krueppel C2H2-type zinc-finger protein family.

It is found in the nucleus. Its function is as follows. May be involved in transcriptional regulation. In Pongo pygmaeus (Bornean orangutan), this protein is Zinc finger protein 287.